The sequence spans 217 residues: MSGGLAPSKSTVYVSNLPFSLTNNDLYRIFSKYGKVVKVTIMKDKDTRRSKGVAFILFLDKDSAQNCTRAINNKQLFGRVIKASIAIDNGRAAEFIRRRNYFDKSKCYECGESGHLSYACPKNMLGEREPPKKKEKKKKKKIPEPEEEIEEVEESEDEGEDPALDSLSQAIAFQQAKIEEEQKKWKPSSGGPSTSDDSRRPRIKKSTYFSDEEELSD.

One can recognise an RRM domain in the interval 10 to 88 (STVYVSNLPF…RVIKASIAID (79 aa)). The CCHC-type zinc-finger motif lies at 105–122 (SKCYECGESGHLSYACPK). The tract at residues 120 to 217 (CPKNMLGERE…YFSDEEELSD (98 aa)) is disordered. A compositionally biased stretch (acidic residues) spans 145-163 (PEEEIEEVEESEDEGEDPA). Phosphoserine is present on residues Ser-155, Ser-210, and Ser-216.

In terms of assembly, component of the U11/U12 snRNPs that are part of the U12-type spliceosome. Interacts with ZRSR1.

It localises to the nucleus. Its subcellular location is the nucleoplasm. This Bos taurus (Bovine) protein is Zinc finger CCHC-type and RNA-binding motif-containing protein 1 (ZCRB1).